A 250-amino-acid chain; its full sequence is 5'-nucleotidase SurE (250 aa).

The a divalent metal cation site is built by aspartate 8, aspartate 9, serine 39, and asparagine 95.

It belongs to the SurE nucleotidase family. A divalent metal cation is required as a cofactor.

It is found in the cytoplasm. The catalysed reaction is a ribonucleoside 5'-phosphate + H2O = a ribonucleoside + phosphate. Nucleotidase that shows phosphatase activity on nucleoside 5'-monophosphates. In Cupriavidus necator (strain ATCC 17699 / DSM 428 / KCTC 22496 / NCIMB 10442 / H16 / Stanier 337) (Ralstonia eutropha), this protein is 5'-nucleotidase SurE.